The sequence spans 794 residues: MEEDLFSLAAGKQPSQQATNETAPRAGEARENAGTDHPGNAEDPAHRRIDYLRSELRRHNRLYYEQAEPEISDAEYDALFLELEKLEKAHPELSDPDSPTRRVGGAPLQGFNQIRHAVPMLSIDDIFEQRDAPVPDEELAEFYHKLSRALQTENVPVSVEPKIDGVALSIMYRNGKLAYAATRGDGDVGDDVTANVRTIRSVPLTLPPGAPPVLEVRGEVFMPNEAFAKLNEERDADGLPAFANPRNATAGTLKQLDPRQVAARPLAFLAHGLGAYEGPELRDAKDFWNMLRHCGIPCNEPVYYTDSLESTRQAVRDIDRLRHTLPYGTDGAVIKISSTATREALGATARAPRWAAAYKFPPEQKETTLLNIVVQVGRTGVLTPVAELQPVLLSGSTVARATLHNQDEIDRKDVRIGDTVLVEKAGEIIPAVLKVNLSKRPQDARPYSILEATKGLCPACGNPIMKEEGKVAWRCTNFTCPAQAVTGITHFCSRSALDVESIGSSVAEALRSSGLASSALDLFSLMPDQLANLNLGTPEEPRRYGEKNARKALDALQNARGLPLERWLIAFGIPLVGEVVAKALADTHPDLKHVADSPYLRDIVRLDELVEQAAKTNPNTRENKKAVKEGALSAEAVQERHQELMEEIDRLTAPYLATGYLRKNTAKFSYGSEIGVAAAKSLRSFFASAAGNHTMDVLHRLGINPQSQSYRASLLEIPAGSLSGKTFVITGTLSHPRDYFEQLIASHGGKATGAISKSTSCLLAGNGGGSKRDKALKLGVPVISEEDFYKMIGN.

The tract at residues 1-47 (MEEDLFSLAAGKQPSQQATNETAPRAGEARENAGTDHPGNAEDPAHR) is disordered. A compositionally biased stretch (polar residues) spans 13–22 (QPSQQATNET). Residues 27-47 (GEARENAGTDHPGNAEDPAHR) are compositionally biased toward basic and acidic residues. NAD(+)-binding positions include 73–77 (DAEYD), 122–123 (SI), and Glu160. Lys162 functions as the N6-AMP-lysine intermediate in the catalytic mechanism. NAD(+)-binding residues include Arg183, Glu219, Lys335, and Lys359. 4 residues coordinate Zn(2+): Cys457, Cys460, Cys475, and Cys480. The region spanning 717–794 (IPAGSLSGKT…EEDFYKMIGN (78 aa)) is the BRCT domain.

This sequence belongs to the NAD-dependent DNA ligase family. LigA subfamily. It depends on Mg(2+) as a cofactor. The cofactor is Mn(2+).

It carries out the reaction NAD(+) + (deoxyribonucleotide)n-3'-hydroxyl + 5'-phospho-(deoxyribonucleotide)m = (deoxyribonucleotide)n+m + AMP + beta-nicotinamide D-nucleotide.. DNA ligase that catalyzes the formation of phosphodiester linkages between 5'-phosphoryl and 3'-hydroxyl groups in double-stranded DNA using NAD as a coenzyme and as the energy source for the reaction. It is essential for DNA replication and repair of damaged DNA. The chain is DNA ligase from Akkermansia muciniphila (strain ATCC BAA-835 / DSM 22959 / JCM 33894 / BCRC 81048 / CCUG 64013 / CIP 107961 / Muc).